A 429-amino-acid polypeptide reads, in one-letter code: MSVVAVTIFVAAYVLIASDRVNKTMVALTGAAAVVVLPVITSHDIFYSHDTGIDWDVIFLLVGMMIIVGVLRQTGVFEYTAIWAAKRARGSPLRIMILLVLVSALASALLDNVTTVLLIAPVTLLVCDRLNINTTSFLMAEVFASNIGGAATLVGDPPNIIVASRAGLTFNDFMLHLTPLVVIVLIALIAVLPRLFGSITVEADRIADVMALDEGEAIRDRGLLVKCGAVLVLVFAAFVAHPVLHIQPSLVALLGAGMLIVVSGLTRSEYLSSVEWDTLLFFAGLFIMVGALVKTGVVNDLARAATQLTGGNIVATAFLILGVSAPISGIIDNIPYVATMTPLVAELVAVMGGQPSTDTPWWALALGADFGGNLTAIGASANVVMLGIARRAGAPISFWEFTRKGAVVTAVSIALAAIYLWLRYFVLLH.

The next 10 membrane-spanning stretches (helical) occupy residues 26–46 (VALT…HDIF), 51–71 (TGID…VGVL), 99–119 (LVLV…VLLI), 135–155 (TSFL…TLVG), 173–193 (FMLH…AVLP), 223–243 (LLVK…AHPV), 278–298 (TLLF…TGVV), 311–331 (GNIV…SGII), 361–381 (WWAL…GASA), and 407–427 (VVTA…YFVL).

Belongs to the CitM (TC 2.A.11) transporter family.

It localises to the cell membrane. This is an uncharacterized protein from Mycobacterium tuberculosis (strain ATCC 25618 / H37Rv).